A 123-amino-acid polypeptide reads, in one-letter code: MNAITETVDLQAPPPVPLVFTDSAAAKVKDLLAEEGNPELKLRVFVQGGGCSGFQYGFTFDEVVNEDDTVLDKEGVQLLVDPMSFQYLVGAEIDYKEDLEGAQFVIRNPNATTTCGCGSSFSV.

Iron-sulfur cluster contacts are provided by C51, C115, and C117.

The protein belongs to the HesB/IscA family. In terms of assembly, homodimer. Requires iron-sulfur cluster as cofactor.

In terms of biological role, required for insertion of 4Fe-4S clusters. This chain is Putative iron-sulfur cluster insertion protein ErpA, found in Bordetella avium (strain 197N).